The chain runs to 228 residues: uncharacterized protein (228 aa).

S-adenosyl-L-methionine contacts are provided by G179, I199, and L208.

Belongs to the class IV-like SAM-binding methyltransferase superfamily. RNA methyltransferase TrmH family.

This is an uncharacterized protein from Borreliella burgdorferi (strain ATCC 35210 / DSM 4680 / CIP 102532 / B31) (Borrelia burgdorferi).